We begin with the raw amino-acid sequence, 441 residues long: tRNA-2-methylthio-N(6)-dimethylallyladenosine synthase (441 aa).

The MTTase N-terminal domain maps to 2 to 117; sequence KGLYIKSYGC…LPELLVKAHR (116 aa). [4Fe-4S] cluster-binding residues include cysteine 11, cysteine 47, cysteine 80, cysteine 157, cysteine 161, and cysteine 164. One can recognise a Radical SAM core domain in the interval 143–374; it reads KNQETSAFIS…QKLLREQQLA (232 aa).

It belongs to the methylthiotransferase family. MiaB subfamily. In terms of assembly, monomer. The cofactor is [4Fe-4S] cluster.

It localises to the cytoplasm. The catalysed reaction is N(6)-dimethylallyladenosine(37) in tRNA + (sulfur carrier)-SH + AH2 + 2 S-adenosyl-L-methionine = 2-methylsulfanyl-N(6)-dimethylallyladenosine(37) in tRNA + (sulfur carrier)-H + 5'-deoxyadenosine + L-methionine + A + S-adenosyl-L-homocysteine + 2 H(+). Its function is as follows. Catalyzes the methylthiolation of N6-(dimethylallyl)adenosine (i(6)A), leading to the formation of 2-methylthio-N6-(dimethylallyl)adenosine (ms(2)i(6)A) at position 37 in tRNAs that read codons beginning with uridine. The sequence is that of tRNA-2-methylthio-N(6)-dimethylallyladenosine synthase from Ehrlichia canis (strain Jake).